The chain runs to 581 residues: Arginine--tRNA ligase (581 aa).

Residues P123–H133 carry the 'HIGH' region motif.

Belongs to the class-I aminoacyl-tRNA synthetase family. Monomer.

It is found in the cytoplasm. The enzyme catalyses tRNA(Arg) + L-arginine + ATP = L-arginyl-tRNA(Arg) + AMP + diphosphate. In Blochmanniella pennsylvanica (strain BPEN), this protein is Arginine--tRNA ligase.